The chain runs to 672 residues: Transcriptional regulator Kaiso (672 aa).

The tract at residues 1–103 (MESRKLISAT…RSDLLDELIK (103 aa)) is interaction with NCOR1. The self-association stretch occupies residues 1-136 (MESRKLISAT…SGTAQDGNTE (136 aa)). The BTB domain maps to 32 to 94 (CDVTVIVEDR…IYSSKIVRVR (63 aa)). Residues K151 and K153 each participate in a glycyl lysine isopeptide (Lys-Gly) (interchain with G-Cter in SUMO2) cross-link. The residue at position 251 (T251) is a Phosphothreonine. The tract at residues 298–573 (LPNHMPSSIN…FMSSHIKSVH (276 aa)) is interaction with CBFA2T3. Positions 325 to 354 (KANEEEEEEIIDDDDDTISSSPDSAVSNTS) are disordered. The span at 328 to 341 (EEEEEEIIDDDDDT) shows a compositional bias: acidic residues. Residues K390, K407, K414, K449, K465, K474, and K479 each participate in a glycyl lysine isopeptide (Lys-Gly) (interchain with G-Cter in SUMO2) cross-link. The tract at residues 454–672 (EGEARLENEI…EFEFIIPESY (219 aa)) is interaction with CTNND1. Residues 471-480 (MANKRMKVKH) carry the Nuclear localization signal motif. C2H2-type zinc fingers lie at residues 494–516 (YICI…FNIH), 522–544 (YPCR…EIHH), and 550–573 (YQCL…KSVH). The tract at residues 514–638 (NIHSWEKKYP…TTTSTQNKPM (125 aa)) is required for DNA-binding. Residues K539, K570, K582, K611, and K618 each participate in a glycyl lysine isopeptide (Lys-Gly) (interchain with G-Cter in SUMO2) cross-link. Positions 616 to 635 (GYKVDTGKEPPVGTTTSTQN) are disordered.

Self-associates. Interacts with CTNND2. Interacts with CTNND1, and this interaction inhibits binding to both methylated and non-methylated DNA. Interacts with NCOR1. Interacts with KPNA2/RCH1, which may mediate nuclear import of this protein. Interacts with CBFA2T3. As to expression, expressed in vascular endothelium.

The protein resides in the nucleus. It localises to the cytoplasm. Its function is as follows. Transcriptional regulator with bimodal DNA-binding specificity. Binds to methylated CpG dinucleotides in the consensus sequence 5'-CGCG-3' and also binds to the non-methylated consensus sequence 5'-CTGCNA-3' also known as the consensus kaiso binding site (KBS). Recruits the N-CoR repressor complex to promote histone deacetylation and the formation of repressive chromatin structures in target gene promoters. May contribute to the repression of target genes of the Wnt signaling pathway. May also activate transcription of a subset of target genes by the recruitment of CTNND2. Represses expression of MMP7 in conjunction with transcriptional corepressors CBFA2T3, CBFA2T2 and RUNX1T1. The sequence is that of Transcriptional regulator Kaiso (ZBTB33) from Homo sapiens (Human).